A 179-amino-acid chain; its full sequence is Protein GrpE (179 aa).

Residues 1–29 (MQDQDKYAEQAASIEDPVTAEAASATTPT) form a disordered region.

It belongs to the GrpE family. Homodimer.

It localises to the cytoplasm. Its function is as follows. Participates actively in the response to hyperosmotic and heat shock by preventing the aggregation of stress-denatured proteins, in association with DnaK and GrpE. It is the nucleotide exchange factor for DnaK and may function as a thermosensor. Unfolded proteins bind initially to DnaJ; upon interaction with the DnaJ-bound protein, DnaK hydrolyzes its bound ATP, resulting in the formation of a stable complex. GrpE releases ADP from DnaK; ATP binding to DnaK triggers the release of the substrate protein, thus completing the reaction cycle. Several rounds of ATP-dependent interactions between DnaJ, DnaK and GrpE are required for fully efficient folding. This Janthinobacterium sp. (strain Marseille) (Minibacterium massiliensis) protein is Protein GrpE.